A 661-amino-acid polypeptide reads, in one-letter code: Peroxisomal acyl-coenzyme A oxidase 1 (661 aa).

2 positions are modified to N6-succinyllysine: Lys-89 and Lys-90. Thr-139 is an FAD binding site. Lys-159 carries the post-translational modification N6-succinyllysine. An FAD-binding site is contributed by Gly-178. Lys-216 carries the N6-acetyllysine modification. At Lys-241 the chain carries N6-succinyllysine. N6-acetyllysine occurs at positions 255, 267, and 272. Lys-349 carries the N6-succinyllysine modification. The active-site Proton acceptor is the Glu-421. Lys-437, Lys-446, Lys-512, and Lys-637 each carry N6-acetyllysine; alternate. An N6-succinyllysine; alternate mark is found at Lys-437, Lys-446, Lys-512, and Lys-637. An N6-succinyllysine modification is found at Lys-643. Phosphoserine is present on Ser-649. Lys-652 is subject to N6-acetyllysine. The residue at position 655 (Lys-655) is an N6-succinyllysine. Positions 659–661 (SKL) match the Microbody targeting signal motif.

This sequence belongs to the acyl-CoA oxidase family. In terms of assembly, homodimer. Interacts with LONP2. The cofactor is FAD.

It localises to the peroxisome. It carries out the reaction a 2,3-saturated acyl-CoA + O2 = a (2E)-enoyl-CoA + H2O2. It catalyses the reaction hexadecanoyl-CoA + O2 = (2E)-hexadecenoyl-CoA + H2O2. The catalysed reaction is dodecanoyl-CoA + O2 = (2E)-dodecenoyl-CoA + H2O2. The enzyme catalyses octanoyl-CoA + O2 = (2E)-octenoyl-CoA + H2O2. It carries out the reaction decanoyl-CoA + O2 = (2E)-decenoyl-CoA + H2O2. It catalyses the reaction tetradecanoyl-CoA + O2 = (2E)-tetradecenoyl-CoA + H2O2. The catalysed reaction is hexadecanedioyl-CoA + O2 = (2E)-hexadecenedioyl-CoA + H2O2. The enzyme catalyses tetracosanoyl-CoA + O2 = (2E)-tetracosenoyl-CoA + H2O2. It carries out the reaction glutaryl-CoA + O2 = (2E)-glutaconyl-CoA + H2O2. It catalyses the reaction hexanoyl-CoA + O2 = (2E)-hexenoyl-CoA + H2O2. The catalysed reaction is octadecanoyl-CoA + O2 = (2E)-octadecenoyl-CoA + H2O2. The enzyme catalyses (5Z,8Z,11Z,14Z,17Z)-eicosapentaenoyl-CoA + O2 = (2E,5Z,8Z,11Z,14Z,17Z)-icosahexaenoyl-CoA + H2O2. It carries out the reaction (6Z,9Z,12Z,15Z,18Z,21Z)-tetracosahexaenoyl-CoA + O2 = (2E,6Z,9Z,12Z,15Z,18Z,21Z)-tetracosaheptaenoyl-CoA + H2O2. The protein operates within lipid metabolism; peroxisomal fatty acid beta-oxidation. Involved in the initial and rate-limiting step of peroxisomal beta-oxidation of straight-chain saturated and unsaturated very-long-chain fatty acids. Catalyzes the desaturation of fatty acyl-CoAs such as palmitoyl-CoA (hexadecanoyl-CoA) to 2-trans-enoyl-CoAs ((2E)-enoyl-CoAs) such as (2E)-hexadecenoyl-CoA, and donates electrons directly to molecular oxygen (O(2)), thereby producing hydrogen peroxide (H(2)O(2)). Isoform 2 shows higher activity with hexadecanoyl-CoA as substrate than isoform 1. This Phascolarctos cinereus (Koala) protein is Peroxisomal acyl-coenzyme A oxidase 1 (ACOX1).